A 185-amino-acid polypeptide reads, in one-letter code: Threonylcarbamoyl-AMP synthase (185 aa).

Positions S4–A185 constitute a YrdC-like domain.

Belongs to the SUA5 family. TsaC subfamily.

It localises to the cytoplasm. It carries out the reaction L-threonine + hydrogencarbonate + ATP = L-threonylcarbamoyladenylate + diphosphate + H2O. In terms of biological role, required for the formation of a threonylcarbamoyl group on adenosine at position 37 (t(6)A37) in tRNAs that read codons beginning with adenine. Catalyzes the conversion of L-threonine, HCO(3)(-)/CO(2) and ATP to give threonylcarbamoyl-AMP (TC-AMP) as the acyladenylate intermediate, with the release of diphosphate. The protein is Threonylcarbamoyl-AMP synthase of Pseudomonas paraeruginosa (strain DSM 24068 / PA7) (Pseudomonas aeruginosa (strain PA7)).